The following is a 309-amino-acid chain: Taste receptor type 2 member 45 (309 aa).

Residue Met-1 is a topological domain, extracellular. The helical transmembrane segment at 2–22 (ITFLPIIFSILVVVTFVIGNF) threads the bilayer. Topologically, residues 23 to 55 (ANGFIALVNSTEWVKRQKISFADQIVTALAVSR) are cytoplasmic. Residues 56 to 76 (VGLLWVLLLNWYSTVLNPAFY) form a helical membrane-spanning segment. Residues 77–98 (SVELRTTAYNIWAVTGHFSNWL) lie on the Extracellular side of the membrane. Residues 99 to 119 (ATSLSIFYLLKIANFSNLIFL) form a helical membrane-spanning segment. The Cytoplasmic portion of the chain corresponds to 120 to 126 (HLKRRVK). The chain crosses the membrane as a helical span at residues 127–147 (SVILVMLLGPLLFLACHLFVV). Over 148-178 (NMNQIVWTKEYEGNMTWKIKLRRAMYLSDTT) the chain is Extracellular. N-linked (GlcNAc...) asparagine glycosylation is present at Asn-161. A helical transmembrane segment spans residues 179–199 (VTMLANLVPFTVTLISFLLLV). The Cytoplasmic segment spans residues 200–229 (CSLCEHLKKMQLHGKGSQDPSTKVHIKALQ). A helical membrane pass occupies residues 230-250 (TVISFLLLCAIYFVSVIISVW). Topologically, residues 251 to 259 (SFKNLENKP) are extracellular. The chain crosses the membrane as a helical span at residues 260 to 280 (VFMFCQAIGFSCSSAHPFILI). The Cytoplasmic segment spans residues 281-309 (WGNKKLKQPFLSVLWQMRYWVKGEKPSSS).

Belongs to the G-protein coupled receptor T2R family.

Its subcellular location is the membrane. Functionally, receptor that may play a role in the perception of bitterness and is gustducin-linked. May play a role in sensing the chemical composition of the gastrointestinal content. The activity of this receptor may stimulate alpha gustducin, mediate PLC-beta-2 activation and lead to the gating of TRPM5. The chain is Taste receptor type 2 member 45 (TAS2R45) from Pan paniscus (Pygmy chimpanzee).